We begin with the raw amino-acid sequence, 79 residues long: Exodeoxyribonuclease 7 small subunit (79 aa).

Belongs to the XseB family. As to quaternary structure, heterooligomer composed of large and small subunits.

Its subcellular location is the cytoplasm. The enzyme catalyses Exonucleolytic cleavage in either 5'- to 3'- or 3'- to 5'-direction to yield nucleoside 5'-phosphates.. In terms of biological role, bidirectionally degrades single-stranded DNA into large acid-insoluble oligonucleotides, which are then degraded further into small acid-soluble oligonucleotides. This Shouchella clausii (strain KSM-K16) (Alkalihalobacillus clausii) protein is Exodeoxyribonuclease 7 small subunit.